A 55-amino-acid polypeptide reads, in one-letter code: ATP synthase F(0) complex subunit 8 (55 aa).

The helical transmembrane segment at 4–24 (LNPAPWFAILVFSWLVFLTVI) threads the bilayer. Positions 36 to 55 (EPTSQSTEKTKPEPWNWPWH) are disordered.

This sequence belongs to the ATPase protein 8 family. As to quaternary structure, component of the ATP synthase complex composed at least of ATP5F1A/subunit alpha, ATP5F1B/subunit beta, ATP5MC1/subunit c (homooctomer), MT-ATP6/subunit a, MT-ATP8/subunit 8, ATP5ME/subunit e, ATP5MF/subunit f, ATP5MG/subunit g, ATP5MK/subunit k, ATP5MJ/subunit j, ATP5F1C/subunit gamma, ATP5F1D/subunit delta, ATP5F1E/subunit epsilon, ATP5PF/subunit F6, ATP5PB/subunit b, ATP5PD/subunit d, ATP5PO/subunit OSCP. ATP synthase complex consists of a soluble F(1) head domain (subunits alpha(3) and beta(3)) - the catalytic core - and a membrane F(0) domain - the membrane proton channel (subunits c, a, 8, e, f, g, k and j). These two domains are linked by a central stalk (subunits gamma, delta, and epsilon) rotating inside the F1 region and a stationary peripheral stalk (subunits F6, b, d, and OSCP).

It is found in the mitochondrion membrane. In terms of biological role, subunit 8, of the mitochondrial membrane ATP synthase complex (F(1)F(0) ATP synthase or Complex V) that produces ATP from ADP in the presence of a proton gradient across the membrane which is generated by electron transport complexes of the respiratory chain. ATP synthase complex consist of a soluble F(1) head domain - the catalytic core - and a membrane F(1) domain - the membrane proton channel. These two domains are linked by a central stalk rotating inside the F(1) region and a stationary peripheral stalk. During catalysis, ATP synthesis in the catalytic domain of F(1) is coupled via a rotary mechanism of the central stalk subunits to proton translocation. In vivo, can only synthesize ATP although its ATP hydrolase activity can be activated artificially in vitro. Part of the complex F(0) domain. This is ATP synthase F(0) complex subunit 8 from Salvelinus alpinus (Arctic char).